The chain runs to 362 residues: METIHVDLAERSYPISIGAELFCNPAHFSSVIPAKKRVVVISNVTVAPLYAQQIIDTLNTFECQVSLLELDDGEQYKNLDTFNQILTFLLEENHSRDVTIVALGGGVVGDVVGFASACYQRGVDFIQVPTTLLSQVDSSVGGKTAINHPLGKNMVGAFYQPKAVIIDINCLKTLPEREFAAGMAEVIKYGIIIDSDFFDWLDENMEKLYALDHDALVYAISRCCQIKADVVAKDEKESGVRALLNLGHTFGHAIEAEMGYGNWLHGEAVSAGTVMAAVTAQKEGLISQQEVDRICALLKKAKLPLKAPKEMTVEAFMKHMMRDKKVLSGKLRLVLPTSIGSSEVVTGVSERVLADVIEQCKA.

NAD(+) is bound by residues 72–77, 106–110, 130–131, lysine 143, lysine 152, and 170–173; these read DGEQYK, GVVGD, TT, and CLKT. Zn(2+) is bound by residues glutamate 185, histidine 248, and histidine 265.

Belongs to the sugar phosphate cyclases superfamily. Dehydroquinate synthase family. It depends on Co(2+) as a cofactor. Requires Zn(2+) as cofactor. NAD(+) serves as cofactor.

It localises to the cytoplasm. The catalysed reaction is 7-phospho-2-dehydro-3-deoxy-D-arabino-heptonate = 3-dehydroquinate + phosphate. It functions in the pathway metabolic intermediate biosynthesis; chorismate biosynthesis; chorismate from D-erythrose 4-phosphate and phosphoenolpyruvate: step 2/7. Catalyzes the conversion of 3-deoxy-D-arabino-heptulosonate 7-phosphate (DAHP) to dehydroquinate (DHQ). The protein is 3-dehydroquinate synthase of Aliivibrio salmonicida (strain LFI1238) (Vibrio salmonicida (strain LFI1238)).